Consider the following 309-residue polypeptide: D-galacturonate reductase (309 aa).

Catalysis depends on Y50, which acts as the Proton donor. Residue H109 participates in substrate binding. 210–264 is an NADP(+) binding site; that stretch reads SPLGSTGSPLMSADPVVKIAEKKGISPTTVLLSYHVNRGSTVLAKSVTPARIKAN.

Belongs to the aldo/keto reductase family.

The catalysed reaction is L-galactonate + NADP(+) = aldehydo-D-galacturonate + NADPH + H(+). It functions in the pathway carbohydrate acid metabolism. Functionally, mediates the reduction of D-galacturonate to L-galactonate, the first step in D-galacturonate catabolic process. Also has activity with D-glucuronate and DL-glyceraldehyde. No activity is observed with D-glucose, D-fructose, D-xylose, D-galactose, L-arabinose or D-mannose. Activity is seen only with NADPH and not with NADH. The protein is D-galacturonate reductase (gar1) of Hypocrea jecorina (Trichoderma reesei).